The primary structure comprises 63 residues: Venom peptide U-reduvitoxin-Pp19 (63 aa).

Residues 1–23 form the signal peptide; it reads MSPYSILFVVVIALCLLPESIVG. 3 disulfides stabilise this stretch: cysteine 15/cysteine 62, cysteine 25/cysteine 53, and cysteine 30/cysteine 61.

Hemolymph (at protein level). Also weakly expressed by the venom gland (at protein level).

The protein resides in the secreted. Functionally, toxin with insecticidal activity. High doses of recombinant toxin causes impaired motor behavior of D.melanogaster, which progress slowly to paralysis and death after several hours. The polypeptide is Venom peptide U-reduvitoxin-Pp19 (Pristhesancus plagipennis (Common assassin bug)).